A 431-amino-acid polypeptide reads, in one-letter code: Keratin, type I cytoskeletal 40 (431 aa).

A head region spans residues 1–89 (MASDCSPTGC…CEDGVFNSNE (89 aa)). Positions 89–400 (EKETMQFLND…GLLDSEDSRL (312 aa)) constitute an IF rod domain. The segment at 90–124 (KETMQFLNDRLASYLEKVRGLEELNAELECRIREQ) is coil 1A. Residues 125 to 135 (CEEDVPLVCPD) are linker 1. The coil 1B stretch occupies residues 136 to 236 (YQCYFDTIED…HEEEVNVLRG (101 aa)). Positions 237 to 252 (QLGDRLSVELDTAPTT) are linker 12. The coil 2 stretch occupies residues 253–396 (DLNRVLDEMR…NTYQGLLDSE (144 aa)). Residues 397–431 (DSRLPCNPCSATSMSNDTCEPCSAYVICTVENSCP) are tail.

It belongs to the intermediate filament family. As to quaternary structure, heterotetramer of two type I and two type II keratins.

In terms of biological role, may play a role in late hair differentiation. In Bos taurus (Bovine), this protein is Keratin, type I cytoskeletal 40 (KRT40).